Here is a 22-residue protein sequence, read N- to C-terminus: Antimicrobial peptide 5 (22 aa).

L22 carries the post-translational modification Leucine amide.

As to expression, skin.

It is found in the secreted. Its function is as follows. Has very strong antimicrobial activity against Gram-positive bacterium S.aureus, Gram-negative bacterium E.coli and yeast C.albicans. Has strong hemolytic activity against human red blood cells. This Xenopus tropicalis (Western clawed frog) protein is Antimicrobial peptide 5.